Consider the following 291-residue polypeptide: MTSSYLHFPDFDPVIFSIGPVALHWYGLMYLVGFVFAMWLAVRRANRPGSGWTKNEVENLLYAGFLGVFLGGRIGYVLFYNFPLFLDNPLYLFRVWDGGMSFHGGLIGVILVMIIFARRTKRSFFQVSDFIAPLIPFGLGAGRLGNFINGELWGRVDPNFRFAMLFPGSRAEDIALLPSHPQWQPIFDTYGVLPRHPSQLYELALEGVVLFIILNLFIRKPRPMGAVSGLFLIGYGAFRIIVEFFRQPDAQFTGAWVQYISMGQILSIPMIIAGAIMMVWAYRRRPQQHVS.

The next 7 membrane-spanning stretches (helical) occupy residues 21–41, 60–80, 96–116, 130–150, 198–218, 225–245, and 260–280; these read VALH…MWLA, LLYA…VLFY, WDGG…MIIF, FIAP…FING, SQLY…NLFI, GAVS…VEFF, and ISMG…MMVW. Arginine 143 contributes to the a 1,2-diacyl-sn-glycero-3-phospho-(1'-sn-glycerol) binding site.

Belongs to the Lgt family.

It is found in the cell inner membrane. The catalysed reaction is L-cysteinyl-[prolipoprotein] + a 1,2-diacyl-sn-glycero-3-phospho-(1'-sn-glycerol) = an S-1,2-diacyl-sn-glyceryl-L-cysteinyl-[prolipoprotein] + sn-glycerol 1-phosphate + H(+). It participates in protein modification; lipoprotein biosynthesis (diacylglyceryl transfer). Its function is as follows. Catalyzes the transfer of the diacylglyceryl group from phosphatidylglycerol to the sulfhydryl group of the N-terminal cysteine of a prolipoprotein, the first step in the formation of mature lipoproteins. The sequence is that of Phosphatidylglycerol--prolipoprotein diacylglyceryl transferase from Salmonella newport (strain SL254).